Reading from the N-terminus, the 72-residue chain is Phosphonoacetate hydrolase (72 aa).

As to quaternary structure, monomer. Requires Unlike bacterial phosphonoacetate hydrolase, does not require zinc as a cofactor. as cofactor.

The enzyme catalyses phosphonoacetate + H2O = acetate + phosphate + H(+). Unaffected by EDTA or Ca(2+), Co(2+), Cu(2+), Mg(2+), Mn(2+), Ni(2+) and Zn(2+). The chain is Phosphonoacetate hydrolase from Penicillium oxalicum.